Consider the following 93-residue polypeptide: Aspartyl/glutamyl-tRNA(Asn/Gln) amidotransferase subunit C (93 aa).

It belongs to the GatC family. As to quaternary structure, heterotrimer of A, B and C subunits.

The catalysed reaction is L-glutamyl-tRNA(Gln) + L-glutamine + ATP + H2O = L-glutaminyl-tRNA(Gln) + L-glutamate + ADP + phosphate + H(+). It carries out the reaction L-aspartyl-tRNA(Asn) + L-glutamine + ATP + H2O = L-asparaginyl-tRNA(Asn) + L-glutamate + ADP + phosphate + 2 H(+). Functionally, allows the formation of correctly charged Asn-tRNA(Asn) or Gln-tRNA(Gln) through the transamidation of misacylated Asp-tRNA(Asn) or Glu-tRNA(Gln) in organisms which lack either or both of asparaginyl-tRNA or glutaminyl-tRNA synthetases. The reaction takes place in the presence of glutamine and ATP through an activated phospho-Asp-tRNA(Asn) or phospho-Glu-tRNA(Gln). This is Aspartyl/glutamyl-tRNA(Asn/Gln) amidotransferase subunit C from Methanothrix thermoacetophila (strain DSM 6194 / JCM 14653 / NBRC 101360 / PT) (Methanosaeta thermophila).